Here is a 129-residue protein sequence, read N- to C-terminus: Large-conductance mechanosensitive channel (129 aa).

A run of 2 helical transmembrane segments spans residues 10 to 30 (FAVK…GAFG) and 70 to 90 (AVML…VIAI).

This sequence belongs to the MscL family. In terms of assembly, homopentamer.

It localises to the cell inner membrane. Functionally, channel that opens in response to stretch forces in the membrane lipid bilayer. May participate in the regulation of osmotic pressure changes within the cell. In Actinobacillus pleuropneumoniae serotype 3 (strain JL03), this protein is Large-conductance mechanosensitive channel.